The primary structure comprises 102 residues: ATP-dependent Clp protease adapter protein ClpS (102 aa).

The protein belongs to the ClpS family. In terms of assembly, binds to the N-terminal domain of the chaperone ClpA.

In terms of biological role, involved in the modulation of the specificity of the ClpAP-mediated ATP-dependent protein degradation. The chain is ATP-dependent Clp protease adapter protein ClpS from Shewanella loihica (strain ATCC BAA-1088 / PV-4).